A 423-amino-acid polypeptide reads, in one-letter code: Glycine-rich protein 1 (423 aa).

Residues 1–20 form the signal peptide; that stretch reads MKKICLTFVFLLSLFPIYSS. Disordered stretches follow at residues 28 to 47, 78 to 133, 159 to 219, and 236 to 288; these read TIESGSSKSSGSSVGNAGPA, DDDN…SKKN, KGGS…GAGA, and GASA…ASAG. Over residues 31-42 the composition is skewed to low complexity; the sequence is SGSSKSSGSSVG. 2 stretches are compositionally biased toward basic and acidic residues: residues 81–93 and 102–111; these read NKDKKKNDEDGKT and QNGDDVKSDN. A compositionally biased stretch (gly residues) spans 159 to 172; it reads KGGSANNGGEGGAT. A compositionally biased stretch (low complexity) spans 173 to 183; the sequence is SAGSAGATSGA. Gly residues-rich tracts occupy residues 205–219 and 236–247; these read GAGGESGGAGAGAGA and GASAGAGAGGAQ. The span at 248–284 shows a compositional bias: low complexity; that stretch reads GDAEAASAGSTAGSTSSGGAAASGASSGAGSSDSGQG.

As to expression, nacreous layer of shell (at protein level).

It is found in the secreted. This chain is Glycine-rich protein 1, found in Pinctada maxima (Silver-lipped pearl oyster).